A 181-amino-acid polypeptide reads, in one-letter code: Der GTPase-activating protein YihI (181 aa).

The segment at 1-73 (MSRIKKARKP…DPRIGSKKPI (73 aa)) is disordered. A compositionally biased stretch (basic and acidic residues) spans 22 to 32 (NRTDRDVESRE). Positions 33 to 42 (LKRKRKRKGL) are enriched in basic residues. The span at 55 to 67 (QARRNAQKKDPRI) shows a compositional bias: basic and acidic residues.

It belongs to the YihI family. Interacts with Der.

Its function is as follows. A GTPase-activating protein (GAP) that modifies Der/EngA GTPase function. May play a role in ribosome biogenesis. This Aliivibrio fischeri (strain MJ11) (Vibrio fischeri) protein is Der GTPase-activating protein YihI.